The chain runs to 552 residues: Protein FAM234A (552 aa).

Basic and acidic residues predominate over residues 1–22 (MLDHKDLEAEIHPLKNEERKSQ). Residues 1-40 (MLDHKDLEAEIHPLKNEERKSQENLGNPSKNEDNVKSAPP) are disordered. The Cytoplasmic portion of the chain corresponds to 1–49 (MLDHKDLEAEIHPLKNEERKSQENLGNPSKNEDNVKSAPPQSRLSRCRA). At serine 21 the chain carries Phosphoserine. Residues 50-70 (AAFFLSLFLCLFVVFVVSFVI) traverse the membrane as a helical; Signal-anchor for type II membrane protein segment. Residues 71 to 552 (PCPDRPASQR…FSRLRYQSEA (482 aa)) are Extracellular-facing. Asparagine 116, asparagine 314, asparagine 389, and asparagine 473 each carry an N-linked (GlcNAc...) asparagine glycan.

Belongs to the FAM234 family.

Its subcellular location is the membrane. The sequence is that of Protein FAM234A from Homo sapiens (Human).